The following is a 401-amino-acid chain: Argininosuccinate synthase (401 aa).

8-16 (AYSGGLDTS) contributes to the ATP binding site. Tyr-85 serves as a coordination point for L-citrulline. ATP is bound at residue Gly-115. L-aspartate-binding residues include Thr-117, Asn-121, and Asp-122. L-citrulline is bound at residue Asn-121. L-citrulline contacts are provided by Arg-125, Ser-173, Glu-258, and Tyr-270.

The protein belongs to the argininosuccinate synthase family. Type 1 subfamily. Homotetramer.

Its subcellular location is the cytoplasm. It carries out the reaction L-citrulline + L-aspartate + ATP = 2-(N(omega)-L-arginino)succinate + AMP + diphosphate + H(+). Its pathway is amino-acid biosynthesis; L-arginine biosynthesis; L-arginine from L-ornithine and carbamoyl phosphate: step 2/3. The protein is Argininosuccinate synthase of Staphylococcus epidermidis (strain ATCC 35984 / DSM 28319 / BCRC 17069 / CCUG 31568 / BM 3577 / RP62A).